A 265-amino-acid polypeptide reads, in one-letter code: Lipopolysaccharide core heptose(I) kinase WaaP (265 aa).

Asp-162 is an active-site residue.

Belongs to the protein kinase superfamily. KdkA/RfaP family. The cofactor is Mg(2+).

It is found in the cell inner membrane. The enzyme catalyses an L-alpha-D-Hep-(1-&gt;3)-L-alpha-D-Hep-(1-&gt;5)-[alpha-Kdo-(2-&gt;4)]-alpha-Kdo-(2-&gt;6)-lipid A + ATP = an L-alpha-D-Hep-(1-&gt;3)-4-O-phospho-L-alpha-D-Hep-(1-&gt;5)-[alpha-Kdo-(2-&gt;4)]-alpha-Kdo-(2-&gt;6)-lipid A + ADP + H(+). It catalyses the reaction L-alpha-D-Hep-(1-&gt;3)-L-alpha-D-Hep-(1-&gt;5)-[alpha-Kdo-(2-&gt;4)]-alpha-Kdo-(2-&gt;6)-lipid A (E. coli) + ATP = L-alpha-D-Hep-(1-&gt;3)-4-O-phospho-L-alpha-D-Hep-(1-&gt;5)-[alpha-Kdo-(2-&gt;4)]-alpha-Kdo-(2-&gt;6)-lipid A (E. coli) + ADP + H(+). The protein operates within bacterial outer membrane biogenesis; LPS core biosynthesis. Kinase involved in the biosynthesis of the core oligosaccharide region of lipopolysaccharide (LPS). Catalyzes the phosphorylation of heptose I (HepI), the first heptose added to the Kdo2-lipid A module. This is Lipopolysaccharide core heptose(I) kinase WaaP from Escherichia coli.